The primary structure comprises 344 residues: Probable electron transfer flavoprotein subunit alpha, mitochondrial (344 aa).

FAD is bound at residue 284–312 (LYIAIGVSGAVQHLAGMKDSKVIVAINND).

Belongs to the ETF alpha-subunit/FixB family. As to quaternary structure, heterodimer of an alpha and a beta subunit. Requires FAD as cofactor.

The protein resides in the mitochondrion matrix. Functionally, the electron transfer flavoprotein serves as a specific electron acceptor for several dehydrogenases, including five acyl-CoA dehydrogenases, glutaryl-CoA and sarcosine dehydrogenase. It transfers the electrons to the main mitochondrial respiratory chain via ETF-ubiquinone oxidoreductase (ETF dehydrogenase). This is Probable electron transfer flavoprotein subunit alpha, mitochondrial (AIM45) from Saccharomyces cerevisiae (strain ATCC 204508 / S288c) (Baker's yeast).